A 596-amino-acid chain; its full sequence is MTTMTVHTMGVHYKWQIPEVLRQQLWLAHNLREDLVSLQLAYDDDLKAIWSSYPDVAQAEDTMAAAEADAVALSERVKQARIEARSKKISTELTQQLRDAKKRLKDARQARRDAIAVVKDDAAERRKARSDQLAADQKALYGQYCRDGDLYWASFNTVLDHHKTAVKRIAAQRASGKPATLRHHRFDGSGTIAVQLQRQAGAPPRTPMVLADEAGKYRNVLHIPGWTDPDVWEQMTRSQCRQSGRVTVRMRCGSTDGQPQWIDLPVQVHRWLPADADITGAELVVTRVAGIYRAKLCVTARIGDTEPVTSGPTVALHLGWRSTEEGTAVATWRSDAPLDIPFGLRTVMRVDAAGTSGIIVVPATIERRLTRTENIASSRSLALDALRDKVVGWLSDNDAPTYRDAPLEAATVKQWKSPQRFASLAHAWKDNGTEISDILWAWFSLDRKQWAQQENGRRKALGHRDDLYRQIAAVISDQAGHVLVDDTSVAELSARAMERTELPTEVQQKIDRRRDHAAPGGLRASVVAAMTRDGVPVTIVAAADFTRTHSRCGHVNPADDRYLSNPVRCDGCGAMYDQDRSFVTLMLRAATAPSNP.

The recognition domain (REC1-N) stretch occupies residues 19-53; sequence EVLRQQLWLAHNLREDLVSLQLAYDDDLKAIWSSY. The interval 54-121 is recognition domain (REC2); that stretch reads PDVAQAEDTM…RDAIAVVKDD (68 aa). Coiled-coil stretches lie at residues 55 to 83 and 91 to 117; these read DVAQAEDTMAAAEADAVALSERVKQARIE and TELTQQLRDAKKRLKDARQARRDAIAV. Residues 122–190 are recognition domain (REC1-C); the sequence is AAERRKARSD…LRHHRFDGSG (69 aa). The segment at 191-302 is wedge domain (WED); the sequence is TIAVQLQRQA…RAKLCVTARI (112 aa). A linker region spans residues 303–313; it reads GDTEPVTSGPT. The tract at residues 314–541 is ruvC-I; it reads VALHLGWRST…RDGVPVTIVA (228 aa). A Mg(2+)-binding site is contributed by His-317. The segment at 541 to 577 is target nucleic-acid binding (TNB); that stretch reads AAADFTRTHSRCGHVNPADDRYLSNPVRCDGCGAMYD. 4 residues coordinate Zn(2+): His-549, Cys-552, Cys-569, and Cys-572. Positions 578–596 are ruvC-II; that stretch reads QDRSFVTLMLRAATAPSNP. Asp-579 contacts Mg(2+).

It belongs to the CRISPR-associated DNA-binding protein Cas12m family. In terms of assembly, binds crRNA and target dsDNA as a monomer. Mg(2+) serves as cofactor. Requires Zn(2+) as cofactor.

Functionally, CRISPR (clustered regularly interspaced short palindromic repeat), is an adaptive immune system that provides protection against mobile genetic elements (viruses, transposable elements and conjugative plasmids). CRISPR clusters contain sequences complementary to antecedent mobile elements and target invading nucleic acids. CRISPR clusters are transcribed and processed into CRISPR RNA (crRNA). Recognizes a short motif in the CRISPR repeat sequences (the 5' PAM or protospacer adjacent motif, 5'-TTN-3' in this organism) to help distinguish self versus nonself, as targets within the bacterial CRISPR locus do not have PAMs. Upon expression in E.coli as a CRISPR locus inhibits plasmid propagation when targeted to regions essential for plasmid propagation (replication origin and dnaA). The crRNA-Cas12m complex inhibits transcription from target DNA leading to gene silencing. Cas12m-crRNA binds DNA in a PAM-dependent, crRNA-guided fashion. Binds a 17-bp crRNA-ss-target DNA heteroduplex, in a 56 nucleotide crRNA. No dsDNA, ssDNA or RNA nuclease activity is seen for the crRNA-Cas12m complex. Is required to process pre-crRNA to mature crRNA without a tracrRNA. Upon expression in E.coli as a CRISPR region preferentially binds to its associated crRNA. This is CRISPR-associated DNA-binding protein Cas12m from Mycolicibacterium mucogenicum (Mycobacterium mucogenicum).